Reading from the N-terminus, the 365-residue chain is Aminomethyltransferase (365 aa).

The protein belongs to the GcvT family. As to quaternary structure, the glycine cleavage system is composed of four proteins: P, T, L and H.

It catalyses the reaction N(6)-[(R)-S(8)-aminomethyldihydrolipoyl]-L-lysyl-[protein] + (6S)-5,6,7,8-tetrahydrofolate = N(6)-[(R)-dihydrolipoyl]-L-lysyl-[protein] + (6R)-5,10-methylene-5,6,7,8-tetrahydrofolate + NH4(+). In terms of biological role, the glycine cleavage system catalyzes the degradation of glycine. This Frankia alni (strain DSM 45986 / CECT 9034 / ACN14a) protein is Aminomethyltransferase.